A 684-amino-acid chain; its full sequence is Chaperone protein HtpG (684 aa).

The segment at 1–329 is a; substrate-binding; that stretch reads MSKKGTIGVT…SPDIPLNVSR (329 aa). Residues 330 to 548 are b; the sequence is SYLQSDANVK…FMRRMRDMAQ (219 aa). The c stretch occupies residues 549–684; the sequence is LQPGMSFYGE…EFIRRSQRLL (136 aa).

It belongs to the heat shock protein 90 family. In terms of assembly, homodimer.

Its subcellular location is the cytoplasm. In terms of biological role, molecular chaperone. Has ATPase activity. The chain is Chaperone protein HtpG from Porphyromonas gingivalis (strain ATCC BAA-308 / W83).